Consider the following 397-residue polypeptide: Citrate synthase (397 aa).

Active-site residues include H266 and D320.

The protein belongs to the citrate synthase family.

It carries out the reaction oxaloacetate + acetyl-CoA + H2O = citrate + CoA + H(+). Its pathway is carbohydrate metabolism; tricarboxylic acid cycle; isocitrate from oxaloacetate: step 1/2. The polypeptide is Citrate synthase (gltA) (Synechocystis sp. (strain ATCC 27184 / PCC 6803 / Kazusa)).